Here is a 904-residue protein sequence, read N- to C-terminus: Phosphoenolpyruvate carboxylase (904 aa).

A disordered region spans residues 52–71; sequence ISRRESDAPPSTLSEQLTGR. Polar residues predominate over residues 60–70; sequence PPSTLSEQLTG. Residues histidine 151 and lysine 570 contribute to the active site.

It belongs to the PEPCase type 1 family. Mg(2+) is required as a cofactor.

The catalysed reaction is oxaloacetate + phosphate = phosphoenolpyruvate + hydrogencarbonate. Its function is as follows. Forms oxaloacetate, a four-carbon dicarboxylic acid source for the tricarboxylic acid cycle. The chain is Phosphoenolpyruvate carboxylase from Xanthomonas euvesicatoria pv. vesicatoria (strain 85-10) (Xanthomonas campestris pv. vesicatoria).